Here is a 384-residue protein sequence, read N- to C-terminus: O-phospho-L-seryl-tRNA:Cys-tRNA synthase 1 (384 aa).

Pyridoxal 5'-phosphate is bound by residues 88 to 89 (AR), Asn195, and 218 to 220 (SGH). Lys221 carries the N6-(pyridoxal phosphate)lysine modification.

Belongs to the SepCysS family. As to quaternary structure, homodimer. Interacts with SepRS. It depends on pyridoxal 5'-phosphate as a cofactor.

The enzyme catalyses O-phospho-L-seryl-tRNA(Cys) + hydrogen sulfide + H(+) = L-cysteinyl-tRNA(Cys) + phosphate. Its function is as follows. Converts O-phospho-L-seryl-tRNA(Cys) (Sep-tRNA(Cys)) to L-cysteinyl-tRNA(Cys) (Cys-tRNA(Cys)). In Methanocella arvoryzae (strain DSM 22066 / NBRC 105507 / MRE50), this protein is O-phospho-L-seryl-tRNA:Cys-tRNA synthase 1.